We begin with the raw amino-acid sequence, 401 residues long: uncharacterized protein (401 aa).

The protein belongs to the herpesviridae BTRF1 family.

This is an uncharacterized protein from Connochaetes taurinus (Blue wildebeest).